The sequence spans 239 residues: MATPHINAEMGDFADVVLMPGDPLRAKYIAETFLEDAREVNNVRGMLGFTGTYKGRKISVMGHGMGIPSCSIYTKELITDFGVKKIIRVGSCGAVLPHVKLRDVVIGMGACTDSKVNRIRFKDHDFAAIADFDMVRNAVDAAKALGVDARVGNLFSADLFYSPDGEMFDVMEKYGILGVEMEAAGIYGVAAEFGAKALTICTVSDHIRTHEQTTAAERQTTFNDMIKIALESVLLGDKE.

H5 is a binding site for a purine D-ribonucleoside. Residues G21 and R25 each coordinate phosphate. An N6-acetyllysine modification is found at K27. Residues R44 and 88 to 91 (RVGS) each bind phosphate. A purine D-ribonucleoside contacts are provided by residues 180–182 (EME) and 204–205 (SD). The Proton donor role is filled by D205.

The protein belongs to the PNP/UDP phosphorylase family. In terms of assembly, homohexamer; trimer of homodimers.

The catalysed reaction is a purine D-ribonucleoside + phosphate = a purine nucleobase + alpha-D-ribose 1-phosphate. It carries out the reaction a purine 2'-deoxy-D-ribonucleoside + phosphate = a purine nucleobase + 2-deoxy-alpha-D-ribose 1-phosphate. Its function is as follows. Catalyzes the reversible phosphorolytic breakdown of the N-glycosidic bond in the beta-(deoxy)ribonucleoside molecules, with the formation of the corresponding free purine bases and pentose-1-phosphate. This is Purine nucleoside phosphorylase DeoD-type from Escherichia coli O81 (strain ED1a).